The primary structure comprises 604 residues: M-phase inducer phosphatase cdc-25.1 (604 aa).

Disordered stretches follow at residues 33-67 and 127-188; these read PKTL…DVDF and EKRV…PFGD. Polar residues predominate over residues 44-54; the sequence is RDSGVSMTSCS. Residues 127-138 are compositionally biased toward basic and acidic residues; it reads EKRVMSERPTDN. The Rhodanese domain occupies 305–413; sequence FDKKYIIVDC…LWSTAECRQI (109 aa). Disordered regions lie at residues 443 to 464 and 562 to 588; these read ASLK…CTRS and DFPD…GGHQ.

This sequence belongs to the MPI phosphatase family.

It carries out the reaction O-phospho-L-tyrosyl-[protein] + H2O = L-tyrosyl-[protein] + phosphate. The polypeptide is M-phase inducer phosphatase cdc-25.1 (cdc-25.1) (Caenorhabditis elegans).